Reading from the N-terminus, the 595-residue chain is uncharacterized protein (595 aa).

Disordered regions lie at residues 50-159 (VNPS…KTKK), 398-430 (TYPTTPLFSEPTIPKPPQQPTTEPPSGFKPPSL), and 450-595 (VTEG…SLDK). The segment covering 83-122 (SNKSSALKKSNKSSNKSSNKSSNKSSNKSSNKSSNKSSNK) has biased composition (low complexity). A compositionally biased stretch (basic and acidic residues) spans 123–132 (FPDKSDKSDS). A compositionally biased stretch (acidic residues) spans 137 to 146 (DNSDDSDDSS). Residues 398-409 (TYPTTPLFSEPT) are compositionally biased toward low complexity. A compositionally biased stretch (pro residues) spans 410–420 (IPKPPQQPTTE). The segment covering 421-430 (PPSGFKPPSL) has biased composition (low complexity). The span at 454–463 (KVVESDDHTS) shows a compositional bias: basic and acidic residues. Residues 467-476 (IPPPPPPPPS) show a composition bias toward pro residues. Low complexity predominate over residues 477–529 (ISSDNSSPNKSVKSSTKSSTKSSTKSSTKSSTKSSTKSPSKTPVKSPIKSSSK). Basic and acidic residues predominate over residues 530–542 (LSDKKSPTKKIES). The segment covering 544–553 (GESDSESDSE) has biased composition (acidic residues). Over residues 559–570 (TKKSTNKIKKIT) the composition is skewed to basic residues. Low complexity predominate over residues 571 to 580 (NNKLENSNTK). Basic residues predominate over residues 581-595 (NNKKFSKKKTISLDK).

This is an uncharacterized protein from Acanthamoeba polyphaga mimivirus (APMV).